The sequence spans 521 residues: Probable cytosol aminopeptidase (521 aa).

Mn(2+) contacts are provided by lysine 268 and aspartate 273. The active site involves lysine 280. Residues aspartate 291, aspartate 350, and glutamate 352 each contribute to the Mn(2+) site. Arginine 354 is a catalytic residue.

It belongs to the peptidase M17 family. Mn(2+) is required as a cofactor.

The protein resides in the cytoplasm. The enzyme catalyses Release of an N-terminal amino acid, Xaa-|-Yaa-, in which Xaa is preferably Leu, but may be other amino acids including Pro although not Arg or Lys, and Yaa may be Pro. Amino acid amides and methyl esters are also readily hydrolyzed, but rates on arylamides are exceedingly low.. It catalyses the reaction Release of an N-terminal amino acid, preferentially leucine, but not glutamic or aspartic acids.. Presumably involved in the processing and regular turnover of intracellular proteins. Catalyzes the removal of unsubstituted N-terminal amino acids from various peptides. The chain is Probable cytosol aminopeptidase from Chromobacterium violaceum (strain ATCC 12472 / DSM 30191 / JCM 1249 / CCUG 213 / NBRC 12614 / NCIMB 9131 / NCTC 9757 / MK).